Consider the following 528-residue polypeptide: DnaJ homolog 1, mitochondrial (528 aa).

The N-terminal 66 residues, 1-66, are a transit peptide targeting the mitochondrion; it reads MFSKYLQSRV…REFSRCAALK (66 aa). In terms of domain architecture, J spans 86–150; sequence DPYKTLGVSK…KKKKAFDTYG (65 aa). The CR-type zinc finger occupies 227-308; it reads GAKKDLSYSV…CMGSGTVRER (82 aa). CXXCXGXG motif repeat units follow at residues 240 to 247, 257 to 264, 280 to 287, and 296 to 303; these read CSSCHGSG, CFACKGTG, CDSCGGTG, and CRSCMGSG. Residues 455–528 are disordered; it reads NDSTARRTQS…QNPKKDESSS (74 aa). The span at 462 to 488 shows a compositional bias: low complexity; that stretch reads TQSSPSGTNSSTSTSSTSSKHSTGIST. The segment covering 513–528 has biased composition (basic and acidic residues); sequence LHPDEDQNPKKDESSS.

It localises to the mitochondrion. This chain is DnaJ homolog 1, mitochondrial (mdj1), found in Schizosaccharomyces pombe (strain 972 / ATCC 24843) (Fission yeast).